A 334-amino-acid polypeptide reads, in one-letter code: Meso-diaminopimelate D-dehydrogenase (334 aa).

NADP(+) is bound by residues 16–19 (YGNL), 40–42 (TRR), 75–78 (CSGS), 98–100 (GFD), and 127–131 (CGWDP). Residues D100, D130, W154, 160-161 (QG), T179, R205, H255, and N284 each bind substrate.

It belongs to the diaminopimelate dehydrogenase family. Homodimer.

It carries out the reaction meso-2,6-diaminopimelate + NADP(+) + H2O = (S)-2-amino-6-oxoheptanedioate + NH4(+) + NADPH + H(+). It functions in the pathway amino-acid biosynthesis; L-lysine biosynthesis via DAP pathway; DL-2,6-diaminopimelate from (S)-tetrahydrodipicolinate: step 1/1. Functionally, catalyzes the reversible NADPH-dependent reductive amination of L-2-amino-6-oxopimelate, the acyclic form of L-tetrahydrodipicolinate, to generate the meso compound, D,L-2,6-diaminopimelate. Probably plays a role in lysine biosynthesis. Exhibits a high substrate specificity for meso-2,6-diaminopimelate (m-DAP), since the activity with L,L-2,6-diaminopimelate is less than 5% of the activity observed with m-DAP. Can use NAD(+) only very poorly since the activity observed in the presence of NAD(+) is about 0.3% of that with NADP(+). The polypeptide is Meso-diaminopimelate D-dehydrogenase (ddh) (Acetivibrio thermocellus (strain ATCC 27405 / DSM 1237 / JCM 9322 / NBRC 103400 / NCIMB 10682 / NRRL B-4536 / VPI 7372) (Clostridium thermocellum)).